We begin with the raw amino-acid sequence, 393 residues long: METFLFTSESVNEGHPDKLCDQISDAVLDACLEQDPDSKVACETCTKTNMVMVFGEITTKATIDYEKIVRDTCRSIGFISDDVGLDADKCKVLVNIEQQSPDIAQGVHGHFTKRPEDIGAGDQGHMFGYATDETPELMPLSHVLATKIGARLTEVRKNGTCRWLRPDGKTQVTVEYYNDNGAMVPVRVHTVLISTQHDETVTNDEIARDLKEHVIKPIIPEKYLDDKTIFHLNPSGRFVIGGPHGDAGLTGRKIIIDTYGGWGAHGGGAFSGKDPTKVDRSGAYIVRQAAKSVVANGMARRALVQVSYAIGVPEPLSVFVDTYGTGLIPDKEILKIVKETFDFRPGMMTINLDLKRGGNGRFQKTAAYGHFGRDDPDFTWEVVKPLKWDKPQA.

Mg(2+) is bound at residue E9. An ATP-binding site is contributed by H15. E43 is a K(+) binding site. Positions 56 and 99 each coordinate L-methionine. ATP is bound by residues 167–169 (DGK), 235–238 (SGRF), D246, 252–253 (RK), A269, K273, and K277. D246 contacts L-methionine. Position 277 (K277) interacts with L-methionine.

It belongs to the AdoMet synthase family. Homotetramer. Interacts with GRF3. Requires Mn(2+) as cofactor. The cofactor is Mg(2+). Co(2+) is required as a cofactor. K(+) serves as cofactor. In terms of tissue distribution, highly expressed in stems and roots. Detected in trichomes (at the protein level).

The protein resides in the cytoplasm. It catalyses the reaction L-methionine + ATP + H2O = S-adenosyl-L-methionine + phosphate + diphosphate. It functions in the pathway amino-acid biosynthesis; S-adenosyl-L-methionine biosynthesis; S-adenosyl-L-methionine from L-methionine: step 1/1. Inhibited by 5,5'-dithiobis-2-nitrobenzoic acid (DTNB) and N-ethylmaleimide (NEM) (in vitro). In terms of biological role, catalyzes the formation of S-adenosylmethionine from methionine and ATP. The reaction comprises two steps that are both catalyzed by the same enzyme: formation of S-adenosylmethionine (AdoMet) and triphosphate, and subsequent hydrolysis of the triphosphate. The sequence is that of S-adenosylmethionine synthase 2 (SAM2) from Arabidopsis thaliana (Mouse-ear cress).